The sequence spans 313 residues: Ribosomal RNA small subunit methyltransferase H (313 aa).

Residues 51-53 (GGH), D71, F98, D119, and Q126 each bind S-adenosyl-L-methionine. The segment at 293 to 313 (EEQRANPRSRSARLRVAERVS) is disordered.

It belongs to the methyltransferase superfamily. RsmH family.

Its subcellular location is the cytoplasm. The catalysed reaction is cytidine(1402) in 16S rRNA + S-adenosyl-L-methionine = N(4)-methylcytidine(1402) in 16S rRNA + S-adenosyl-L-homocysteine + H(+). Its function is as follows. Specifically methylates the N4 position of cytidine in position 1402 (C1402) of 16S rRNA. This Roseiflexus sp. (strain RS-1) protein is Ribosomal RNA small subunit methyltransferase H.